A 78-amino-acid chain; its full sequence is Large ribosomal subunit protein bL28 (78 aa).

Belongs to the bacterial ribosomal protein bL28 family.

In Alcanivorax borkumensis (strain ATCC 700651 / DSM 11573 / NCIMB 13689 / SK2), this protein is Large ribosomal subunit protein bL28.